Reading from the N-terminus, the 213-residue chain is Phosphoheptose isomerase (213 aa).

The 159-residue stretch at 50 to 208 (MAETFEGGGR…IDLVERMLGY (159 aa)) folds into the SIS domain. Position 65–67 (65–67 (NGG)) interacts with substrate. Residues histidine 74 and glutamate 78 each coordinate Zn(2+). Residues glutamate 78, 109 to 110 (ND), 135 to 137 (STS), serine 140, and glutamine 188 contribute to the substrate site. Glutamine 188 and histidine 196 together coordinate Zn(2+).

The protein belongs to the SIS family. GmhA subfamily. Zn(2+) is required as a cofactor.

It is found in the cytoplasm. The catalysed reaction is 2 D-sedoheptulose 7-phosphate = D-glycero-alpha-D-manno-heptose 7-phosphate + D-glycero-beta-D-manno-heptose 7-phosphate. It participates in carbohydrate biosynthesis; D-glycero-D-manno-heptose 7-phosphate biosynthesis; D-glycero-alpha-D-manno-heptose 7-phosphate and D-glycero-beta-D-manno-heptose 7-phosphate from sedoheptulose 7-phosphate: step 1/1. Its function is as follows. Catalyzes the isomerization of sedoheptulose 7-phosphate in D-glycero-D-manno-heptose 7-phosphate. This is Phosphoheptose isomerase from Chlorobium phaeovibrioides (strain DSM 265 / 1930) (Prosthecochloris vibrioformis (strain DSM 265)).